The primary structure comprises 1511 residues: ATP-dependent permease PDR12 (1511 aa).

The segment covering 1 to 21 (MSSTDEHIEKDISSRSNHDDD) has biased composition (basic and acidic residues). The interval 1–37 (MSSTDEHIEKDISSRSNHDDDYANSVQSYAASEGQVD) is disordered. Serine 2 is subject to N-acetylserine. Topologically, residues 2-508 (SSTDEHIEKD…RGFQRVKGDS (507 aa)) are cytoplasmic. Phosphoserine occurs at positions 32, 52, and 56. In terms of domain architecture, ABC transporter 1 spans 144–397 (IPAHLISKFT…FQRMGWVKPN (254 aa)). A Glycyl lysine isopeptide (Lys-Gly) (interchain with G-Cter in ubiquitin) cross-link involves residue lysine 426. The helical transmembrane segment at 509–529 (TYTKVYLSSFLIKALIIGSMF) threads the bilayer. Topologically, residues 530-548 (HKIDDKSQSTTAGAYSRGG) are extracellular. The helical transmembrane segment at 549–569 (MLFYVLLFASVTSLAEIGNSF) threads the bilayer. Residues 570 to 597 (SSRPVIVKHKSYSMYHLSAESLQEIITE) are Cytoplasmic-facing. Residues 598–618 (FPTKFVAIVILCLITYWIPFM) traverse the membrane as a helical segment. Over 619–622 (KYEA) the chain is Extracellular. Residues 623 to 643 (GAFFQYILYLLTVQQCTSFIF) form a helical membrane-spanning segment. Residues 644 to 657 (KFVATMSKSGVDAH) lie on the Cytoplasmic side of the membrane. The helical transmembrane segment at 658–678 (AVGGLWVLMLCVYAGFVLPIG) threads the bilayer. At 679–765 (EMHHWIRWLH…FAYKHAWRNW (87 aa)) the chain is on the extracellular side. The helical transmembrane segment at 766 to 786 (GVNIVWTFGYIVFNVILSEYL) threads the bilayer. Over 787-1182 (KPVEGGGDLL…WRSPVYIRAK (396 aa)) the chain is Cytoplasmic. Positions 836 to 1084 (IAEKDVFTWN…TLLKYFERQS (249 aa)) constitute an ABC transporter 2 domain. ATP-binding positions include 878 to 885 (GESGAGKT) and 972 to 979 (AEALVGKT). A helical transmembrane segment spans residues 1183–1203 (FFECVACALFVGLSYVGVNHS). Position 1204 (valine 1204) is a topological domain, extracellular. The helical transmembrane segment at 1205–1225 (GGAIEAFSSIFMLLLIALAMI) threads the bilayer. The Cytoplasmic portion of the chain corresponds to 1226–1254 (NQLHVFAYDSRELYEVREAASNTFHWSVL). The chain crosses the membrane as a helical span at residues 1255-1275 (LLCHAAVENFWSTLCQFMCFI). Residues 1276–1291 (CYYWPAQFSGRASHAG) lie on the Extracellular side of the membrane. Residues 1292-1312 (FFFFFYVLIFPLYFVTYGLWI) traverse the membrane as a helical segment. Residues 1313–1318 (LYMSPD) lie on the Cytoplasmic side of the membrane. Residues 1319–1339 (VPSASMINSNLFAAMLLFCGI) traverse the membrane as a helical segment. The Extracellular portion of the chain corresponds to 1340–1444 (LQPREKMPAF…NVKWDHRWRN (105 aa)). A glycan (N-linked (GlcNAc...) asparagine) is linked at asparagine 1405. Residues 1445–1465 (FGFMWAYICFNIAAMLICYYV) traverse the membrane as a helical segment. At 1466–1511 (VRVKVWSLKSVLNFKKWFNGPRKERHEKDTNIFQTVPGDENKITKK) the chain is on the cytoplasmic side.

It belongs to the ABC transporter superfamily. ABCG family. PDR (TC 3.A.1.205) subfamily.

The protein localises to the cell membrane. Its function is as follows. Plasma membrane transporter which mediates resistance to water-soluble, monocarboxylic acids with chain lengths of from C1 to C7 by active extrusion of the preservative anions from the cytosol. Also involved in the export of aromatic and branched-chain organic acids produced in amino acid catabolism. The chain is ATP-dependent permease PDR12 (PDR12) from Saccharomyces cerevisiae (strain ATCC 204508 / S288c) (Baker's yeast).